A 275-amino-acid chain; its full sequence is Light-independent protochlorophyllide reductase iron-sulfur ATP-binding protein (275 aa).

Residues 12-17 (GIGKST) and lysine 41 contribute to the ATP site. Position 16 (serine 16) interacts with Mg(2+). The [4Fe-4S] cluster site is built by cysteine 97 and cysteine 131. 182 to 183 (NR) is an ATP binding site.

Belongs to the NifH/BchL/ChlL family. As to quaternary structure, homodimer. Protochlorophyllide reductase is composed of three subunits; BchL, BchN and BchB. [4Fe-4S] cluster is required as a cofactor.

The enzyme catalyses chlorophyllide a + oxidized 2[4Fe-4S]-[ferredoxin] + 2 ADP + 2 phosphate = protochlorophyllide a + reduced 2[4Fe-4S]-[ferredoxin] + 2 ATP + 2 H2O. It participates in porphyrin-containing compound metabolism; bacteriochlorophyll biosynthesis (light-independent). Component of the dark-operative protochlorophyllide reductase (DPOR) that uses Mg-ATP and reduced ferredoxin to reduce ring D of protochlorophyllide (Pchlide) to form chlorophyllide a (Chlide). This reaction is light-independent. The L component serves as a unique electron donor to the NB-component of the complex, and binds Mg-ATP. The protein is Light-independent protochlorophyllide reductase iron-sulfur ATP-binding protein of Prosthecochloris aestuarii (strain DSM 271 / SK 413).